A 222-amino-acid polypeptide reads, in one-letter code: GTP cyclohydrolase 1 (222 aa).

3 residues coordinate Zn(2+): Cys-111, His-114, and Cys-182.

It belongs to the GTP cyclohydrolase I family. As to quaternary structure, toroid-shaped homodecamer, composed of two pentamers of five dimers.

It carries out the reaction GTP + H2O = 7,8-dihydroneopterin 3'-triphosphate + formate + H(+). The protein operates within cofactor biosynthesis; 7,8-dihydroneopterin triphosphate biosynthesis; 7,8-dihydroneopterin triphosphate from GTP: step 1/1. The sequence is that of GTP cyclohydrolase 1 from Klebsiella pneumoniae subsp. pneumoniae (strain ATCC 700721 / MGH 78578).